A 483-amino-acid polypeptide reads, in one-letter code: ATP-dependent RNA helicase dbp-5 (483 aa).

The tract at residues 1–47 (MADLASRITKPDEAPAAAPEAAPVSAPASEEPKAPENETSIEESQSN) is disordered. Residues 14–29 (APAAAPEAAPVSAPAS) are compositionally biased toward low complexity. Residues 74 to 102 (SSFDELGLPEAVNRGLLAINFKKPSKVQE) carry the Q motif motif. The 170-residue stretch at 107–276 (LMLSDPPRNM…ERFAPNANQM (170 aa)) folds into the Helicase ATP-binding domain. 120–127 (SQSGTGKT) is a binding site for ATP. The DEAD box signature appears at 223 to 226 (DEAD). In terms of domain architecture, Helicase C-terminal spans 304–455 (ILCKLYGLMT…LIQLNPNDLD (152 aa)).

This sequence belongs to the DEAD box helicase family. DDX19/DBP5 subfamily. In terms of assembly, associates with the nuclear pore complex.

Its subcellular location is the cytoplasm. It is found in the nucleus. The protein localises to the nuclear pore complex. The protein resides in the nucleus membrane. It carries out the reaction ATP + H2O = ADP + phosphate + H(+). ATP-dependent RNA helicase associated with the nuclear pore complex and essential for mRNA export from the nucleus. May participate in a terminal step of mRNA export through the removal of proteins that accompany mRNA through the nucleopore complex. May also be involved in early transcription. This is ATP-dependent RNA helicase dbp-5 (dbp-5) from Neurospora crassa (strain ATCC 24698 / 74-OR23-1A / CBS 708.71 / DSM 1257 / FGSC 987).